A 377-amino-acid polypeptide reads, in one-letter code: UPF0754 membrane protein lmo2224 (377 aa).

2 consecutive transmembrane segments (helical) span residues 1–21 and 357–377; these read MSVL…GAMT and YLGG…AMWI.

Belongs to the UPF0754 family.

Its subcellular location is the cell membrane. The chain is UPF0754 membrane protein lmo2224 from Listeria monocytogenes serovar 1/2a (strain ATCC BAA-679 / EGD-e).